The sequence spans 317 residues: tRNA dimethylallyltransferase (317 aa).

G14–S21 serves as a coordination point for ATP. T16–S21 provides a ligand contact to substrate. Interaction with substrate tRNA stretches follow at residues D39–L42 and Q163–R167.

This sequence belongs to the IPP transferase family. As to quaternary structure, monomer. The cofactor is Mg(2+).

It carries out the reaction adenosine(37) in tRNA + dimethylallyl diphosphate = N(6)-dimethylallyladenosine(37) in tRNA + diphosphate. Functionally, catalyzes the transfer of a dimethylallyl group onto the adenine at position 37 in tRNAs that read codons beginning with uridine, leading to the formation of N6-(dimethylallyl)adenosine (i(6)A). The protein is tRNA dimethylallyltransferase of Xylella fastidiosa (strain M23).